Consider the following 227-residue polypeptide: UPF0173 metal-dependent hydrolase Oter_4201 (227 aa).

Belongs to the UPF0173 family.

The protein is UPF0173 metal-dependent hydrolase Oter_4201 of Opitutus terrae (strain DSM 11246 / JCM 15787 / PB90-1).